Reading from the N-terminus, the 752-residue chain is DNA ligase (752 aa).

A disordered region spans residues 1-25 (MKRNGFVPSNSVGRRGIPSNSTSSA). NAD(+)-binding positions include 91 to 95 (DADFD), 140 to 141 (SL), and Glu-170. Lys-172 (N6-AMP-lysine intermediate) is an active-site residue. NAD(+) contacts are provided by Arg-193, Glu-233, Lys-350, and Lys-374. Cys-474, Cys-477, Cys-493, and Cys-499 together coordinate Zn(2+). The BRCT domain maps to 669-752 (STPRTLAGLT…TLLDGGPAAL (84 aa)).

This sequence belongs to the NAD-dependent DNA ligase family. LigA subfamily. Mg(2+) serves as cofactor. Mn(2+) is required as a cofactor.

The catalysed reaction is NAD(+) + (deoxyribonucleotide)n-3'-hydroxyl + 5'-phospho-(deoxyribonucleotide)m = (deoxyribonucleotide)n+m + AMP + beta-nicotinamide D-nucleotide.. In terms of biological role, DNA ligase that catalyzes the formation of phosphodiester linkages between 5'-phosphoryl and 3'-hydroxyl groups in double-stranded DNA using NAD as a coenzyme and as the energy source for the reaction. It is essential for DNA replication and repair of damaged DNA. The sequence is that of DNA ligase from Nocardioides sp. (strain ATCC BAA-499 / JS614).